The following is a 314-amino-acid chain: 4-hydroxy-3-methylbut-2-enyl diphosphate reductase (314 aa).

C12 lines the [4Fe-4S] cluster pocket. (2E)-4-hydroxy-3-methylbut-2-enyl diphosphate contacts are provided by H41 and H74. Residues H41 and H74 each contribute to the dimethylallyl diphosphate site. The isopentenyl diphosphate site is built by H41 and H74. Position 96 (C96) interacts with [4Fe-4S] cluster. H124 serves as a coordination point for (2E)-4-hydroxy-3-methylbut-2-enyl diphosphate. Residue H124 participates in dimethylallyl diphosphate binding. Residue H124 coordinates isopentenyl diphosphate. E126 functions as the Proton donor in the catalytic mechanism. T167 serves as a coordination point for (2E)-4-hydroxy-3-methylbut-2-enyl diphosphate. Position 197 (C197) interacts with [4Fe-4S] cluster. Positions 225, 226, 227, and 269 each coordinate (2E)-4-hydroxy-3-methylbut-2-enyl diphosphate. Dimethylallyl diphosphate is bound by residues S225, S226, N227, and S269. Isopentenyl diphosphate-binding residues include S225, S226, N227, and S269.

Belongs to the IspH family. [4Fe-4S] cluster is required as a cofactor.

The catalysed reaction is isopentenyl diphosphate + 2 oxidized [2Fe-2S]-[ferredoxin] + H2O = (2E)-4-hydroxy-3-methylbut-2-enyl diphosphate + 2 reduced [2Fe-2S]-[ferredoxin] + 2 H(+). It catalyses the reaction dimethylallyl diphosphate + 2 oxidized [2Fe-2S]-[ferredoxin] + H2O = (2E)-4-hydroxy-3-methylbut-2-enyl diphosphate + 2 reduced [2Fe-2S]-[ferredoxin] + 2 H(+). It functions in the pathway isoprenoid biosynthesis; dimethylallyl diphosphate biosynthesis; dimethylallyl diphosphate from (2E)-4-hydroxy-3-methylbutenyl diphosphate: step 1/1. It participates in isoprenoid biosynthesis; isopentenyl diphosphate biosynthesis via DXP pathway; isopentenyl diphosphate from 1-deoxy-D-xylulose 5-phosphate: step 6/6. Functionally, catalyzes the conversion of 1-hydroxy-2-methyl-2-(E)-butenyl 4-diphosphate (HMBPP) into a mixture of isopentenyl diphosphate (IPP) and dimethylallyl diphosphate (DMAPP). Acts in the terminal step of the DOXP/MEP pathway for isoprenoid precursor biosynthesis. This Aliivibrio fischeri (strain ATCC 700601 / ES114) (Vibrio fischeri) protein is 4-hydroxy-3-methylbut-2-enyl diphosphate reductase.